Reading from the N-terminus, the 312-residue chain is Elongation factor Ts (312 aa).

The segment at 80–83 (TDFV) is involved in Mg(2+) ion dislocation from EF-Tu.

The protein belongs to the EF-Ts family.

The protein resides in the cytoplasm. Functionally, associates with the EF-Tu.GDP complex and induces the exchange of GDP to GTP. It remains bound to the aminoacyl-tRNA.EF-Tu.GTP complex up to the GTP hydrolysis stage on the ribosome. The protein is Elongation factor Ts of Maricaulis maris (strain MCS10) (Caulobacter maris).